The sequence spans 291 residues: Protease HtpX homolog (291 aa).

2 helical membrane-spanning segments follow: residues 4–24 (VILFLLTNFAVMLVLSVTARI) and 38–58 (MGMLLVFAALIGFGGSFISLL). Histidine 144 contributes to the Zn(2+) binding site. Residue glutamate 145 is part of the active site. Histidine 148 is a Zn(2+) binding site. A run of 2 helical transmembrane segments spans residues 159–179 (LIQGVLNTFVIFLSRIIAYAV) and 199–219 (ISSIACEILFGILASIVVMFF). Residue glutamate 224 coordinates Zn(2+).

This sequence belongs to the peptidase M48B family. Requires Zn(2+) as cofactor.

The protein localises to the cell inner membrane. The sequence is that of Protease HtpX homolog from Pelodictyon phaeoclathratiforme (strain DSM 5477 / BU-1).